The chain runs to 368 residues: MLSAARLQFAQGSVRRLTVSARDAPTKISTLAVKVHGGSRYATKDGVAHLLNRFNFQNTNTRSALKLVRESELLGGTFKSTLDREYITLKATFLKDDLPYYVNALADVLYKTAFKPHELTESVLPAARYDYAVAEQCPVKSAEDQLYAITFRKGLGNPLLYDGVERVSLQDIKDFADKVYTKENLEVSGENVVEADLKRFVDESLLSTLPAGKSLVSKSEPKFFLGEENRVRFIGDSVAAIGIPVNKASLAQYEVLANYLTSALSELSGLISSAKLDKFTDGGLFTLFVRDQDSAVVSSNIKKIVADLKKGKDLSPAINYTKLKNAVQNESVSSPIELNFDAVKDFKLGKFNYVAVGDVSNLPYLDEL.

Residues 1–16 (MLSAARLQFAQGSVRR) constitute a mitochondrion transit peptide. A phosphoserine mark is found at serine 141 and serine 168.

Belongs to the peptidase M16 family. UQCRC2/QCR2 subfamily. As to quaternary structure, component of the ubiquinol-cytochrome c oxidoreductase (cytochrome b-c1 complex, complex III, CIII), a multisubunit enzyme composed of 10 subunits. The complex is composed of 3 respiratory subunits cytochrome b (COB), cytochrome c1 (CYT1) and Rieske protein (RIP1), 2 core protein subunits COR1 and QCR2, and 5 low-molecular weight protein subunits QCR6, QCR7, QCR8, QCR9 and QCR10. The complex exists as an obligatory dimer and forms supercomplexes (SCs) in the inner mitochondrial membrane with a monomer or a dimer of cytochrome c oxidase (complex IV, CIV), resulting in 2 different assemblies (supercomplexes III(2)IV and III(2)IV(2)).

Its subcellular location is the mitochondrion inner membrane. In terms of biological role, component of the ubiquinol-cytochrome c oxidoreductase, a multisubunit transmembrane complex that is part of the mitochondrial electron transport chain which drives oxidative phosphorylation. The respiratory chain contains 3 multisubunit complexes succinate dehydrogenase (complex II, CII), ubiquinol-cytochrome c oxidoreductase (cytochrome b-c1 complex, complex III, CIII) and cytochrome c oxidase (complex IV, CIV), that cooperate to transfer electrons derived from NADH and succinate to molecular oxygen, creating an electrochemical gradient over the inner membrane that drives transmembrane transport and the ATP synthase. The cytochrome b-c1 complex catalyzes electron transfer from ubiquinol to cytochrome c, linking this redox reaction to translocation of protons across the mitochondrial inner membrane, with protons being carried across the membrane as hydrogens on the quinol. In the process called Q cycle, 2 protons are consumed from the matrix, 4 protons are released into the intermembrane space and 2 electrons are passed to cytochrome c. In Saccharomyces cerevisiae (strain ATCC 204508 / S288c) (Baker's yeast), this protein is Cytochrome b-c1 complex subunit 2, mitochondrial (QCR2).